The primary structure comprises 198 residues: Formate-dependent nitrite reductase complex subunit NrfG (198 aa).

TPR repeat units follow at residues 73–106 (SEQWALLGEYYLWQNDYSNSLLAYRQALQLRGEN) and 144–177 (ITALMLLASDAFMQANYAQAIELWQKVMDLNSPR).

Its function is as follows. Required for formate-dependent nitrite reduction. Not required for the biosynthesis of any of the c-type cytochromes nor for the secretion of the periplasmic cytochromes. The chain is Formate-dependent nitrite reductase complex subunit NrfG (nrfG) from Escherichia coli O157:H7.